Here is a 222-residue protein sequence, read N- to C-terminus: Triosephosphate isomerase (222 aa).

Residue N9–K11 participates in substrate binding. H93 (electrophile) is an active-site residue. The active-site Proton acceptor is the E141. Substrate-binding positions include I146, G181, and A202–S203.

Belongs to the triosephosphate isomerase family. In terms of assembly, homotetramer; dimer of dimers.

The protein localises to the cytoplasm. The catalysed reaction is D-glyceraldehyde 3-phosphate = dihydroxyacetone phosphate. It participates in carbohydrate biosynthesis; gluconeogenesis. Its pathway is carbohydrate degradation; glycolysis; D-glyceraldehyde 3-phosphate from glycerone phosphate: step 1/1. In terms of biological role, involved in the gluconeogenesis. Catalyzes stereospecifically the conversion of dihydroxyacetone phosphate (DHAP) to D-glyceraldehyde-3-phosphate (G3P). The polypeptide is Triosephosphate isomerase (Methanothermus fervidus (strain ATCC 43054 / DSM 2088 / JCM 10308 / V24 S)).